The chain runs to 288 residues: Pirin-like protein CC_3178 (288 aa).

Belongs to the pirin family.

The sequence is that of Pirin-like protein CC_3178 from Caulobacter vibrioides (strain ATCC 19089 / CIP 103742 / CB 15) (Caulobacter crescentus).